The following is a 472-amino-acid chain: Succinate-semialdehyde dehydrogenase [NADP(+)] (472 aa).

Residues 134 to 135, 158 to 161, and 210 to 211 each bind NADP(+); these read WN, KHAS, and GS. Glu232 serves as the catalytic Proton acceptor. NADP(+) is bound at residue Leu233. Cys266 acts as the Nucleophile in catalysis. Glu363 lines the NADP(+) pocket.

Belongs to the aldehyde dehydrogenase family.

The catalysed reaction is succinate semialdehyde + NADP(+) + H2O = succinate + NADPH + 2 H(+). Catalyzes the NADP(+)-dependent oxidation of succinate semialdehyde to succinate. It is believed to be the main source of succinate semialdehyde dehydrogenase activity in Mycobacterium. This chain is Succinate-semialdehyde dehydrogenase [NADP(+)] (gabD1), found in Mycobacterium avium (strain 104).